Consider the following 97-residue polypeptide: Large ribosomal subunit protein uL23 (97 aa).

It belongs to the universal ribosomal protein uL23 family. In terms of assembly, part of the 50S ribosomal subunit. Contacts protein L29, and trigger factor when it is bound to the ribosome.

One of the early assembly proteins it binds 23S rRNA. One of the proteins that surrounds the polypeptide exit tunnel on the outside of the ribosome. Forms the main docking site for trigger factor binding to the ribosome. This chain is Large ribosomal subunit protein uL23, found in Lactococcus lactis subsp. cremoris (strain SK11).